Here is a 467-residue protein sequence, read N- to C-terminus: Zinc finger protein 410 (467 aa).

Disordered regions lie at residues 84–111 (PDGE…SLLQ) and 187–214 (NAKT…PLPQ). 5 consecutive C2H2-type zinc fingers follow at residues 219–243 (LKCT…LKTH), 249–273 (FICP…MRTH), 279–303 (FVCP…LRIH), 309–333 (FLCE…LVVH), and 339–362 (HQCQ…RKHH). The Zn(2+) site is built by Cys221, Cys226, His239, His243, Cys251, Cys256, His269, His273, Cys281, Cys286, His299, His303, Cys311, Cys316, His329, His333, Cys341, Cys344, His357, and His361.

In terms of assembly, interacts with CDKN2A/p14ARF. O-glycosylated. O-GlcNAcylation may occur in response to increasing glucose levels and affect transcription factor activity. Post-translationally, sumoylated. Sumoylation increases its half-life, possibly by blocking ubiquitin-mediated degradation.

It localises to the nucleus. It is found in the chromosome. In terms of biological role, transcription factor that binds to the sequence motif 5'-CATCCCATAATA-3', and is specifically required to silence expression of fetal hemoglobin in adult erythroid cells. Prevents expression of fetal hemoglobin genes HBG1 and HBG2 through CHD4: acts as a direct transcriptional activator of CHD4, a central component of the NuRD complex that represses transcription of fetal hemoglobin genes HBG1 and HBG2 in erythroid cells. May also activate transcription of matrix-remodeling genes such as MMP1 during fibroblast senescence. May activate transcription of the gap junction gene GJC1, perhaps in response to increasing glucose. However, recent studies suggest that ZNF410 is dedicated to regulate expression of a single gene: CHD4. This Bos taurus (Bovine) protein is Zinc finger protein 410.